The chain runs to 150 residues: Heavy metal-associated isoprenylated plant protein 24 (150 aa).

The 64-residue stretch at 26-89 (QTVALRVARI…AAKSTKKKVE (64 aa)) folds into the HMA domain. Residues Cys-37 and Cys-40 each coordinate a metal cation. A Cysteine methyl ester modification is found at Cys-147. The S-farnesyl cysteine moiety is linked to residue Cys-147. Residues 148–150 (AIM) constitute a propeptide, removed in mature form.

This sequence belongs to the HIPP family. As to quaternary structure, interacts with ZHD11/HB29.

Its function is as follows. Heavy-metal-binding protein. The sequence is that of Heavy metal-associated isoprenylated plant protein 24 from Arabidopsis thaliana (Mouse-ear cress).